The primary structure comprises 460 residues: Phosphomethylpyrimidine synthase (460 aa).

Residues Asn-80, Met-109, Tyr-139, His-175, Ser-195–Gly-197, Asp-236–Arg-239, and Glu-275 contribute to the substrate site. His-279 contributes to the Zn(2+) binding site. Substrate is bound at residue Tyr-302. His-343 contacts Zn(2+). [4Fe-4S] cluster is bound by residues Cys-423, Cys-426, and Cys-431.

This sequence belongs to the ThiC family. Requires [4Fe-4S] cluster as cofactor.

The enzyme catalyses 5-amino-1-(5-phospho-beta-D-ribosyl)imidazole + S-adenosyl-L-methionine = 4-amino-2-methyl-5-(phosphooxymethyl)pyrimidine + CO + 5'-deoxyadenosine + formate + L-methionine + 3 H(+). The protein operates within cofactor biosynthesis; thiamine diphosphate biosynthesis. Functionally, catalyzes the synthesis of the hydroxymethylpyrimidine phosphate (HMP-P) moiety of thiamine from aminoimidazole ribotide (AIR) in a radical S-adenosyl-L-methionine (SAM)-dependent reaction. This chain is Phosphomethylpyrimidine synthase, found in Microcystis aeruginosa (strain NIES-843 / IAM M-2473).